Here is a 428-residue protein sequence, read N- to C-terminus: Dihydroorotase (428 aa).

Zn(2+) is bound by residues histidine 60 and histidine 62. Residues 62–64 (HLR) and asparagine 94 each bind substrate. Zn(2+) is bound by residues aspartate 152, histidine 179, and histidine 232. Asparagine 278 serves as a coordination point for substrate. A Zn(2+)-binding site is contributed by aspartate 305. Residue aspartate 305 is part of the active site. Residue histidine 309 coordinates substrate.

Belongs to the metallo-dependent hydrolases superfamily. DHOase family. Class I DHOase subfamily. Zn(2+) serves as cofactor.

The catalysed reaction is (S)-dihydroorotate + H2O = N-carbamoyl-L-aspartate + H(+). The protein operates within pyrimidine metabolism; UMP biosynthesis via de novo pathway; (S)-dihydroorotate from bicarbonate: step 3/3. Catalyzes the reversible cyclization of carbamoyl aspartate to dihydroorotate. The polypeptide is Dihydroorotase (Ruminiclostridium cellulolyticum (strain ATCC 35319 / DSM 5812 / JCM 6584 / H10) (Clostridium cellulolyticum)).